The chain runs to 152 residues: Aspartate carbamoyltransferase regulatory chain (152 aa).

The Zn(2+) site is built by cysteine 108, cysteine 113, cysteine 137, and cysteine 140.

It belongs to the PyrI family. Contains catalytic and regulatory chains. It depends on Zn(2+) as a cofactor.

Involved in allosteric regulation of aspartate carbamoyltransferase. In Neisseria gonorrhoeae (strain ATCC 700825 / FA 1090), this protein is Aspartate carbamoyltransferase regulatory chain.